The sequence spans 337 residues: uncharacterized protein (337 aa).

The region spanning 5 to 235 (VEFDNVSRLY…PRTPFVAGFV (231 aa)) is the ABC transporter domain. 37-44 (GPSGSGKT) contacts ATP.

The protein belongs to the ABC transporter superfamily.

Probably part of the ABC transporter complex YdcSTUV. Probably responsible for energy coupling to the transport system. This is an uncharacterized protein from Escherichia coli (strain K12).